A 279-amino-acid chain; its full sequence is Large ribosomal subunit protein uL2 (279 aa).

Disordered stretches follow at residues 1–59 (MGIR…GGHK) and 224–279 (VAMN…KNKR). 2 stretches are compositionally biased toward basic residues: residues 50–59 (TTRHKGGGHK) and 269–279 (VRRRRTGKNKR).

It belongs to the universal ribosomal protein uL2 family. Part of the 50S ribosomal subunit. Forms a bridge to the 30S subunit in the 70S ribosome.

Functionally, one of the primary rRNA binding proteins. Required for association of the 30S and 50S subunits to form the 70S ribosome, for tRNA binding and peptide bond formation. It has been suggested to have peptidyltransferase activity; this is somewhat controversial. Makes several contacts with the 16S rRNA in the 70S ribosome. The protein is Large ribosomal subunit protein uL2 of Arthrobacter sp. (strain FB24).